The primary structure comprises 343 residues: Methionine synthase (343 aa).

4 residues coordinate Zn(2+): H211, C213, E236, and C315.

Belongs to the archaeal MetE family. Zn(2+) serves as cofactor.

It functions in the pathway amino-acid biosynthesis; L-methionine biosynthesis via de novo pathway. Its function is as follows. Catalyzes the transfer of a methyl group to L-homocysteine resulting in methionine formation. The physiological methyl donor is unknown. The polypeptide is Methionine synthase (Thermoplasma acidophilum (strain ATCC 25905 / DSM 1728 / JCM 9062 / NBRC 15155 / AMRC-C165)).